Consider the following 427-residue polypeptide: UPF0761 membrane protein Plut_1323 (427 aa).

Transmembrane regions (helical) follow at residues 51 to 71 (LLSI…FAVF), 105 to 125 (TFTM…VLIS), 147 to 167 (FTLY…SLAA), 188 to 208 (LLSL…YLLV), 221 to 241 (GALV…FYVA), and 251 to 271 (GALS…VVVL).

Belongs to the UPF0761 family.

Its subcellular location is the cell inner membrane. This chain is UPF0761 membrane protein Plut_1323, found in Chlorobium luteolum (strain DSM 273 / BCRC 81028 / 2530) (Pelodictyon luteolum).